The chain runs to 175 residues: Ribosome-binding factor A (175 aa).

The disordered stretch occupies residues 125–175; that stretch reads TAKHAGEADPYKSDAPEDVDIDEDDFDEEDIDLAGDDDIDEDANKDADSSK. Residues 128–139 show a composition bias toward basic and acidic residues; that stretch reads HAGEADPYKSDA. The segment covering 140–165 has biased composition (acidic residues); that stretch reads PEDVDIDEDDFDEEDIDLAGDDDIDE. Basic and acidic residues predominate over residues 166 to 175; the sequence is DANKDADSSK.

The protein belongs to the RbfA family. In terms of assembly, monomer. Binds 30S ribosomal subunits, but not 50S ribosomal subunits or 70S ribosomes.

It localises to the cytoplasm. One of several proteins that assist in the late maturation steps of the functional core of the 30S ribosomal subunit. Associates with free 30S ribosomal subunits (but not with 30S subunits that are part of 70S ribosomes or polysomes). Required for efficient processing of 16S rRNA. May interact with the 5'-terminal helix region of 16S rRNA. The polypeptide is Ribosome-binding factor A (Pseudarthrobacter chlorophenolicus (strain ATCC 700700 / DSM 12829 / CIP 107037 / JCM 12360 / KCTC 9906 / NCIMB 13794 / A6) (Arthrobacter chlorophenolicus)).